Consider the following 134-residue polypeptide: Small ribosomal subunit protein uS8c (134 aa).

Belongs to the universal ribosomal protein uS8 family. Part of the 30S ribosomal subunit.

The protein localises to the plastid. It is found in the chloroplast. Its function is as follows. One of the primary rRNA binding proteins, it binds directly to 16S rRNA central domain where it helps coordinate assembly of the platform of the 30S subunit. The protein is Small ribosomal subunit protein uS8c (rps8) of Bigelowiella natans (Pedinomonas minutissima).